Here is a 439-residue protein sequence, read N- to C-terminus: Homogentisate 1,2-dioxygenase (439 aa).

Histidine 293 serves as the catalytic Proton acceptor. Residues histidine 336 and glutamate 342 each contribute to the Fe cation site. 2 residues coordinate homogentisate: tyrosine 351 and histidine 372. Histidine 372 is a Fe cation binding site.

Belongs to the homogentisate dioxygenase family. As to quaternary structure, hexamer; dimer of trimers. It depends on Fe cation as a cofactor.

The catalysed reaction is homogentisate + O2 = 4-maleylacetoacetate + H(+). Its pathway is amino-acid degradation; L-phenylalanine degradation; acetoacetate and fumarate from L-phenylalanine: step 4/6. Involved in the catabolism of homogentisate (2,5-dihydroxyphenylacetate or 2,5-OH-PhAc), a central intermediate in the degradation of phenylalanine and tyrosine. Catalyzes the oxidative ring cleavage of the aromatic ring of homogentisate to yield maleylacetoacetate. This is Homogentisate 1,2-dioxygenase from Cupriavidus pinatubonensis (strain JMP 134 / LMG 1197) (Cupriavidus necator (strain JMP 134)).